The sequence spans 448 residues: tRNA(Ile)-lysidine synthase (448 aa).

ATP is bound at residue 27–32 (SGGVDS).

Belongs to the tRNA(Ile)-lysidine synthase family.

Its subcellular location is the cytoplasm. It carries out the reaction cytidine(34) in tRNA(Ile2) + L-lysine + ATP = lysidine(34) in tRNA(Ile2) + AMP + diphosphate + H(+). Its function is as follows. Ligates lysine onto the cytidine present at position 34 of the AUA codon-specific tRNA(Ile) that contains the anticodon CAU, in an ATP-dependent manner. Cytidine is converted to lysidine, thus changing the amino acid specificity of the tRNA from methionine to isoleucine. The protein is tRNA(Ile)-lysidine synthase of Vibrio campbellii (strain ATCC BAA-1116).